Reading from the N-terminus, the 298-residue chain is N-acetylmuramic acid 6-phosphate etherase (298 aa).

Residues 55-218 (IHAQVSGGGR…STGLMIKSGK (164 aa)) form the SIS domain. The Proton donor role is filled by Glu-83. The active site involves Glu-114.

Belongs to the GCKR-like family. MurNAc-6-P etherase subfamily. In terms of assembly, homodimer.

The catalysed reaction is N-acetyl-D-muramate 6-phosphate + H2O = N-acetyl-D-glucosamine 6-phosphate + (R)-lactate. Its pathway is amino-sugar metabolism; 1,6-anhydro-N-acetylmuramate degradation. It functions in the pathway amino-sugar metabolism; N-acetylmuramate degradation. It participates in cell wall biogenesis; peptidoglycan recycling. Functionally, specifically catalyzes the cleavage of the D-lactyl ether substituent of MurNAc 6-phosphate, producing GlcNAc 6-phosphate and D-lactate. Together with AnmK, is also required for the utilization of anhydro-N-acetylmuramic acid (anhMurNAc) either imported from the medium or derived from its own cell wall murein, and thus plays a role in cell wall recycling. This Shigella dysenteriae serotype 1 (strain Sd197) protein is N-acetylmuramic acid 6-phosphate etherase.